Reading from the N-terminus, the 418-residue chain is 3-isopropylmalate dehydratase large subunit 1 (418 aa).

C298, C358, and C361 together coordinate [4Fe-4S] cluster.

This sequence belongs to the aconitase/IPM isomerase family. LeuC type 2 subfamily. Heterodimer of LeuC and LeuD. Requires [4Fe-4S] cluster as cofactor.

The enzyme catalyses (2R,3S)-3-isopropylmalate = (2S)-2-isopropylmalate. The protein operates within amino-acid biosynthesis; L-leucine biosynthesis; L-leucine from 3-methyl-2-oxobutanoate: step 2/4. In terms of biological role, catalyzes the isomerization between 2-isopropylmalate and 3-isopropylmalate, via the formation of 2-isopropylmaleate. The protein is 3-isopropylmalate dehydratase large subunit 1 of Thermotoga maritima (strain ATCC 43589 / DSM 3109 / JCM 10099 / NBRC 100826 / MSB8).